The sequence spans 574 residues: Septation ring formation regulator EzrA (574 aa).

Residues 1-7 (MSSGIIL) are Extracellular-facing. The helical transmembrane segment at 8 to 26 (LIVAIVLLVIIAYLVGVII) threads the bilayer. Residues 27–574 (RKRNDSLITS…YEKTREHIRF (548 aa)) are Cytoplasmic-facing. 3 coiled-coil regions span residues 102 to 141 (NFIRAKHEINSVESQLNLVEEDIASIREALNILKEQEEKN), 274 to 350 (ELVT…ETES), and 459 to 520 (QLEA…SFEA).

The protein belongs to the EzrA family.

Its subcellular location is the cell membrane. Its function is as follows. Negative regulator of FtsZ ring formation; modulates the frequency and position of FtsZ ring formation. Inhibits FtsZ ring formation at polar sites. Interacts either with FtsZ or with one of its binding partners to promote depolymerization. The protein is Septation ring formation regulator EzrA of Streptococcus pyogenes serotype M6 (strain ATCC BAA-946 / MGAS10394).